A 598-amino-acid chain; its full sequence is Aspartate--tRNA(Asp/Asn) ligase (598 aa).

Glutamate 177 is an L-aspartate binding site. The interval 201–204 (QLFK) is aspartate. Residue arginine 223 participates in L-aspartate binding. ATP contacts are provided by residues 223–225 (RDE) and glutamine 232. Histidine 456 is a binding site for L-aspartate. Glutamate 493 lines the ATP pocket. Position 500 (arginine 500) interacts with L-aspartate. ATP is bound at residue 545–548 (GLDR).

Belongs to the class-II aminoacyl-tRNA synthetase family. Type 1 subfamily. In terms of assembly, homodimer.

It localises to the cytoplasm. It catalyses the reaction tRNA(Asx) + L-aspartate + ATP = L-aspartyl-tRNA(Asx) + AMP + diphosphate. Functionally, aspartyl-tRNA synthetase with relaxed tRNA specificity since it is able to aspartylate not only its cognate tRNA(Asp) but also tRNA(Asn). Reaction proceeds in two steps: L-aspartate is first activated by ATP to form Asp-AMP and then transferred to the acceptor end of tRNA(Asp/Asn). In Prochlorococcus marinus (strain MIT 9215), this protein is Aspartate--tRNA(Asp/Asn) ligase.